The following is a 266-amino-acid chain: L-aspartate dehydrogenase (266 aa).

NAD(+) is bound by residues A123 and N189. The active site involves H219.

This sequence belongs to the L-aspartate dehydrogenase family.

It carries out the reaction L-aspartate + NADP(+) + H2O = oxaloacetate + NH4(+) + NADPH + H(+). The enzyme catalyses L-aspartate + NAD(+) + H2O = oxaloacetate + NH4(+) + NADH + H(+). It participates in cofactor biosynthesis; NAD(+) biosynthesis; iminoaspartate from L-aspartate (dehydrogenase route): step 1/1. Functionally, specifically catalyzes the NAD or NADP-dependent dehydrogenation of L-aspartate to iminoaspartate. The polypeptide is L-aspartate dehydrogenase (Cupriavidus necator (strain ATCC 17699 / DSM 428 / KCTC 22496 / NCIMB 10442 / H16 / Stanier 337) (Ralstonia eutropha)).